A 366-amino-acid chain; its full sequence is Mannonate dehydratase (366 aa).

It belongs to the mannonate dehydratase family. It depends on Fe(2+) as a cofactor. Mn(2+) is required as a cofactor.

The catalysed reaction is D-mannonate = 2-dehydro-3-deoxy-D-gluconate + H2O. Its pathway is carbohydrate metabolism; pentose and glucuronate interconversion. Its function is as follows. Catalyzes the dehydration of D-mannonate. This Streptococcus pneumoniae (strain 70585) protein is Mannonate dehydratase.